A 292-amino-acid polypeptide reads, in one-letter code: Small ribosomal subunit biogenesis GTPase RsgA (292 aa).

The region spanning R64–L221 is the CP-type G domain. GTP-binding positions include N113–D116 and G164–T172. Residues C245, C250, H252, and C258 each contribute to the Zn(2+) site.

It belongs to the TRAFAC class YlqF/YawG GTPase family. RsgA subfamily. Monomer. Associates with 30S ribosomal subunit, binds 16S rRNA. It depends on Zn(2+) as a cofactor.

The protein resides in the cytoplasm. Its function is as follows. One of several proteins that assist in the late maturation steps of the functional core of the 30S ribosomal subunit. Helps release RbfA from mature subunits. May play a role in the assembly of ribosomal proteins into the subunit. Circularly permuted GTPase that catalyzes slow GTP hydrolysis, GTPase activity is stimulated by the 30S ribosomal subunit. The protein is Small ribosomal subunit biogenesis GTPase RsgA of Clostridium botulinum (strain 657 / Type Ba4).